The primary structure comprises 699 residues: Elongation factor G (699 aa).

A tr-type G domain is found at 8–290 (ERYRNIGIMA…AVLDYLPSPV (283 aa)). GTP-binding positions include 17 to 24 (AHIDAGKT), 88 to 92 (DTPGH), and 142 to 145 (NKMD).

This sequence belongs to the TRAFAC class translation factor GTPase superfamily. Classic translation factor GTPase family. EF-G/EF-2 subfamily.

It is found in the cytoplasm. In terms of biological role, catalyzes the GTP-dependent ribosomal translocation step during translation elongation. During this step, the ribosome changes from the pre-translocational (PRE) to the post-translocational (POST) state as the newly formed A-site-bound peptidyl-tRNA and P-site-bound deacylated tRNA move to the P and E sites, respectively. Catalyzes the coordinated movement of the two tRNA molecules, the mRNA and conformational changes in the ribosome. The chain is Elongation factor G from Acidithiobacillus ferrooxidans (strain ATCC 23270 / DSM 14882 / CIP 104768 / NCIMB 8455) (Ferrobacillus ferrooxidans (strain ATCC 23270)).